A 424-amino-acid polypeptide reads, in one-letter code: Histidine--tRNA ligase (424 aa).

Belongs to the class-II aminoacyl-tRNA synthetase family. Homodimer.

The protein resides in the cytoplasm. It catalyses the reaction tRNA(His) + L-histidine + ATP = L-histidyl-tRNA(His) + AMP + diphosphate + H(+). The protein is Histidine--tRNA ligase of Bacillus licheniformis (strain ATCC 14580 / DSM 13 / JCM 2505 / CCUG 7422 / NBRC 12200 / NCIMB 9375 / NCTC 10341 / NRRL NRS-1264 / Gibson 46).